The chain runs to 750 residues: Photosystem I P700 chlorophyll a apoprotein A1 (750 aa).

8 helical membrane passes run 70-93 (VFSAHFGQLSIIFLWLSGMYFHGA), 156-179 (LYCTAIGALVFAGLMLFAGWFHYH), 195-219 (LNHHLAGLLGLGSLSWAGHQVHVSL), 291-309 (IAHHHLAIAILFLIAGHMY), 346-369 (WHAQLSLNLAMLGSLTIVVAHHMY), 385-411 (LSLFTHHMWIGGFLIVGAAAHAAIFMV), 433-455 (AIISHLNWACIFLGFHSFGLYIH), and 531-549 (FLVHHIHAFTIHVTVLILL). [4Fe-4S] cluster contacts are provided by cysteine 573 and cysteine 582. Transmembrane regions (helical) follow at residues 589-610 (HVFLGLFWMYNAISVVIFHFSW) and 664-686 (LSAYGLFFLGAHFVWAFSLMFLF). Histidine 675 contributes to the chlorophyll a' binding site. 2 residues coordinate chlorophyll a: methionine 683 and tyrosine 691. Tryptophan 692 is a phylloquinone binding site. Residues 724–744 (AVGVTHYLLGGIATTWAFFLA) traverse the membrane as a helical segment.

Belongs to the PsaA/PsaB family. As to quaternary structure, the PsaA/B heterodimer binds the P700 chlorophyll special pair and subsequent electron acceptors. PSI consists of a core antenna complex that captures photons, and an electron transfer chain that converts photonic excitation into a charge separation. The eukaryotic PSI reaction center is composed of at least 11 subunits. P700 is a chlorophyll a/chlorophyll a' dimer, A0 is one or more chlorophyll a, A1 is one or both phylloquinones and FX is a shared 4Fe-4S iron-sulfur center. is required as a cofactor.

It localises to the plastid. It is found in the chloroplast thylakoid membrane. The enzyme catalyses reduced [plastocyanin] + hnu + oxidized [2Fe-2S]-[ferredoxin] = oxidized [plastocyanin] + reduced [2Fe-2S]-[ferredoxin]. PsaA and PsaB bind P700, the primary electron donor of photosystem I (PSI), as well as the electron acceptors A0, A1 and FX. PSI is a plastocyanin-ferredoxin oxidoreductase, converting photonic excitation into a charge separation, which transfers an electron from the donor P700 chlorophyll pair to the spectroscopically characterized acceptors A0, A1, FX, FA and FB in turn. Oxidized P700 is reduced on the lumenal side of the thylakoid membrane by plastocyanin. This chain is Photosystem I P700 chlorophyll a apoprotein A1, found in Drimys granadensis.